A 323-amino-acid chain; its full sequence is Elongation factor P--(R)-beta-lysine ligase (323 aa).

76–78 (SPE) contributes to the substrate binding site. Residues 100-102 (RNE) and Asn-109 contribute to the ATP site. Tyr-118 is a binding site for substrate. ATP is bound at residue 242–243 (EL). Residue Glu-249 participates in substrate binding. Gly-298 contributes to the ATP binding site.

This sequence belongs to the class-II aminoacyl-tRNA synthetase family. EpmA subfamily. Homodimer.

The enzyme catalyses D-beta-lysine + L-lysyl-[protein] + ATP = N(6)-((3R)-3,6-diaminohexanoyl)-L-lysyl-[protein] + AMP + diphosphate + H(+). With EpmB is involved in the beta-lysylation step of the post-translational modification of translation elongation factor P (EF-P). Catalyzes the ATP-dependent activation of (R)-beta-lysine produced by EpmB, forming a lysyl-adenylate, from which the beta-lysyl moiety is then transferred to the epsilon-amino group of a conserved specific lysine residue in EF-P. The protein is Elongation factor P--(R)-beta-lysine ligase of Actinobacillus succinogenes (strain ATCC 55618 / DSM 22257 / CCUG 43843 / 130Z).